The following is a 260-amino-acid chain: Troponin I 3 (260 aa).

Residues 192–219 (DLDEIMAKKKGTADGKPEWSKKEKKEEE) are compositionally biased toward basic and acidic residues. The segment at 192–260 (DLDEIMAKKK…EEEEEEEEEE (69 aa)) is disordered. Over residues 231-260 (PEAEPEPEAAEPAAEEPEAEEEEEEEEEEE) the composition is skewed to acidic residues.

It belongs to the troponin I family. As to expression, expressed in body wall muscle from first larval stage to adult. In adults expression is predominantly in vulval and anal muscles, body wall muscle expression is weaker. Also expressed in vulval muscles of hermaphrodites and the sex muscles of males.

Functionally, troponin I is the inhibitory subunit of troponin, the thin filament regulatory complex which confers calcium-sensitivity to muscle actomyosin ATPase activity. The polypeptide is Troponin I 3 (tni-3) (Caenorhabditis elegans).